Consider the following 92-residue polypeptide: Small ribosomal subunit protein uS17 (92 aa).

The protein belongs to the universal ribosomal protein uS17 family. As to quaternary structure, part of the 30S ribosomal subunit.

Functionally, one of the primary rRNA binding proteins, it binds specifically to the 5'-end of 16S ribosomal RNA. The protein is Small ribosomal subunit protein uS17 of Corynebacterium urealyticum (strain ATCC 43042 / DSM 7109).